A 478-amino-acid polypeptide reads, in one-letter code: Hexokinase (478 aa).

A Hexokinase domain is found at 21–465; the sequence is EYLLKELTEL…LGAGAAIIAA (445 aa). The tract at residues 75–208 is hexokinase small subdomain; that stretch reads TGKEMGDYLA…KVPIEVVALI (134 aa). Lys-111 is an ATP binding site. Residues 151 to 177 form a glucose-binding region; sequence PLGFTFSYPASQGSINEGYLQRWTKGF. The hexokinase large subdomain stretch occupies residues 209-454; it reads NDTTGTLVAS…DPIVIVPAED (246 aa).

The protein belongs to the hexokinase family. As to quaternary structure, monomer.

It catalyses the reaction a D-hexose + ATP = a D-hexose 6-phosphate + ADP + H(+). The enzyme catalyses D-fructose + ATP = D-fructose 6-phosphate + ADP + H(+). The catalysed reaction is D-glucose + ATP = D-glucose 6-phosphate + ADP + H(+). The protein operates within carbohydrate metabolism; hexose metabolism. It participates in carbohydrate degradation; glycolysis; D-glyceraldehyde 3-phosphate and glycerone phosphate from D-glucose: step 1/4. Functionally, catalyzes the phosphorylation of hexose, such as D-glucose and D-fructose, to hexose 6-phosphate (D-glucose 6-phosphate and D-fructose 6-phosphate, respectively). Mediates the initial step of glycolysis by catalyzing phosphorylation of D-glucose to D-glucose 6-phosphate. In Schwanniomyces occidentalis (Yeast), this protein is Hexokinase (HXK).